A 374-amino-acid polypeptide reads, in one-letter code: Chaperone protein DnaJ (374 aa).

Residues 5–70 (DYYEILEIER…GKRQLYDRYG (66 aa)) form the J domain. A CR-type zinc finger spans residues 136–213 (GCKKEIKIRY…CNGKGHENKE (78 aa)). Positions 149, 152, 165, 168, 187, 190, 201, and 204 each coordinate Zn(2+). 4 CXXCXGXG motif repeats span residues 149 to 156 (CPDCKGTG), 165 to 172 (CPDCGGRG), 187 to 194 (CPKCGGSG), and 201 to 208 (CPKCNGKG).

Belongs to the DnaJ family. Homodimer. Requires Zn(2+) as cofactor.

The protein localises to the cytoplasm. Its function is as follows. Participates actively in the response to hyperosmotic and heat shock by preventing the aggregation of stress-denatured proteins and by disaggregating proteins, also in an autonomous, DnaK-independent fashion. Unfolded proteins bind initially to DnaJ; upon interaction with the DnaJ-bound protein, DnaK hydrolyzes its bound ATP, resulting in the formation of a stable complex. GrpE releases ADP from DnaK; ATP binding to DnaK triggers the release of the substrate protein, thus completing the reaction cycle. Several rounds of ATP-dependent interactions between DnaJ, DnaK and GrpE are required for fully efficient folding. Also involved, together with DnaK and GrpE, in the DNA replication of plasmids through activation of initiation proteins. The sequence is that of Chaperone protein DnaJ from Wolinella succinogenes (strain ATCC 29543 / DSM 1740 / CCUG 13145 / JCM 31913 / LMG 7466 / NCTC 11488 / FDC 602W) (Vibrio succinogenes).